A 214-amino-acid chain; its full sequence is Pyrrolidone-carboxylate peptidase (214 aa).

Catalysis depends on residues Glu78, Cys141, and His165.

The protein belongs to the peptidase C15 family. As to quaternary structure, homotetramer.

It is found in the cytoplasm. The catalysed reaction is Release of an N-terminal pyroglutamyl group from a polypeptide, the second amino acid generally not being Pro.. Its function is as follows. Removes 5-oxoproline from various penultimate amino acid residues except L-proline. This is Pyrrolidone-carboxylate peptidase from Streptococcus pneumoniae serotype 2 (strain D39 / NCTC 7466).